The following is a 313-amino-acid chain: MTLQQIKEIYSRPLTELILQALEIHNKNFGNDIELCSLKSIKTGTCPEDCKYCPQSGHYNTSIEKHKLLDKDSILAEAKNAKDAGSKRFCMGAAWKHIPKKDFDQVAEIITEVKNLGLETCVTLGSINADEATKLKQAGLDYYNHNLDTSREFYPEIITTRKFEERIETIRNVANADINVCCGGILGMGESLDDRFNLLLELLQLPAAPKSIPINTLIPVKGTPLGDKYTNAQIDSFELVRFIATTRILFPQARLRLSAGRENMSLETQTLCFLAGINSIFYGNKLLTENNATVNSDNFLLAKLGLKSNAELC.

The 231-residue stretch at 28–258 (NFGNDIELCS…LFPQARLRLS (231 aa)) folds into the Radical SAM core domain. 3 residues coordinate [4Fe-4S] cluster: C46, C50, and C53. Residues C90, C121, C181, and R256 each coordinate [2Fe-2S] cluster.

Belongs to the radical SAM superfamily. Biotin synthase family. As to quaternary structure, homodimer. The cofactor is [4Fe-4S] cluster. It depends on [2Fe-2S] cluster as a cofactor.

It catalyses the reaction (4R,5S)-dethiobiotin + (sulfur carrier)-SH + 2 reduced [2Fe-2S]-[ferredoxin] + 2 S-adenosyl-L-methionine = (sulfur carrier)-H + biotin + 2 5'-deoxyadenosine + 2 L-methionine + 2 oxidized [2Fe-2S]-[ferredoxin]. Its pathway is cofactor biosynthesis; biotin biosynthesis; biotin from 7,8-diaminononanoate: step 2/2. In terms of biological role, catalyzes the conversion of dethiobiotin (DTB) to biotin by the insertion of a sulfur atom into dethiobiotin via a radical-based mechanism. The polypeptide is Biotin synthase (Francisella tularensis subsp. tularensis (strain WY96-3418)).